A 485-amino-acid chain; its full sequence is MTDIINKLQAFADANPQSIAVRHTTDELTYQQLMDESSKLAHRLQGSKKPMILFGHMSPYMIVGMIGAIKAGCGYVPVDTSIPEDRIKMIINKVQPEFVFNTTDESFESLEGEVFTIEDIKTSQDPVIFDSQIKDNDTVYTIFTSGSTGEPKGVQIEYASLVQFTEWMLELNKSGNEQQWLNQAPFSFDLSVMAIYPCLASGGTLNLVDKNMINKPKLLNEMLTSIPINIWVSTPSFMEMCLLLPTLNEEQYGSLNEFFFCGEILPHRAAKALVSRFPSATIYNTYGPTEATVAVTSIQITQEILDQYPTLPVGVERPGARLSTTDEGELVIEGQSVSLGYLKNDQKTAEVFNFDDGIRTYHTGDKAKFENGQWFIQGRIDFQIKLNGYRMELEEIETQLRQSEFVKEAIVVPVYKNDKVIHLIGAIVPTTEVTDNAEMTKNIKNDLKSRLPEYMIPRKFEWMEQLPLTSNGKIDRKKIAEVING.

Residue 144-145 (TS) participates in ATP binding. Residue Asp-189 coordinates D-alanine. Position 284 to 289 (284 to 289 (NTYGPT)) interacts with ATP. Val-293 lines the D-alanine pocket. ATP is bound by residues Asp-365 and Lys-473. Lys-473 provides a ligand contact to D-alanine.

It belongs to the ATP-dependent AMP-binding enzyme family. DltA subfamily.

It is found in the cytoplasm. The catalysed reaction is holo-[D-alanyl-carrier protein] + D-alanine + ATP = D-alanyl-[D-alanyl-carrier protein] + AMP + diphosphate. It functions in the pathway cell wall biogenesis; lipoteichoic acid biosynthesis. Catalyzes the first step in the D-alanylation of lipoteichoic acid (LTA), the activation of D-alanine and its transfer onto the D-alanyl carrier protein (Dcp) DltC. In an ATP-dependent two-step reaction, forms a high energy D-alanyl-AMP intermediate, followed by transfer of the D-alanyl residue as a thiol ester to the phosphopantheinyl prosthetic group of the Dcp. D-alanylation of LTA plays an important role in modulating the properties of the cell wall in Gram-positive bacteria, influencing the net charge of the cell wall. This is D-alanine--D-alanyl carrier protein ligase from Staphylococcus aureus (strain bovine RF122 / ET3-1).